A 549-amino-acid chain; its full sequence is Acetyl-coenzyme A transporter 1 (549 aa).

Over residues M1 to R12 the composition is skewed to basic and acidic residues. The segment at M1–E46 is disordered. The Cytoplasmic segment spans residues M1–S74. 2 positions are modified to phosphoserine: S22 and S42. Over residues D36–E46 the composition is skewed to basic and acidic residues. The chain crosses the membrane as a helical span at residues I75–I95. The Extracellular portion of the chain corresponds to P96–S113. N103 is a glycosylation site (N-linked (GlcNAc...) asparagine). Residues F114–V134 traverse the membrane as a helical segment. Residues K135 to K141 lie on the Cytoplasmic side of the membrane. A helical membrane pass occupies residues S142 to V162. Residues D163–D175 are Extracellular-facing. The helical transmembrane segment at V176–A196 threads the bilayer. The Cytoplasmic segment spans residues V197–N217. A helical membrane pass occupies residues S218–A238. Over D239–T256 the chain is Extracellular. The helical transmembrane segment at L257–L277 threads the bilayer. The Cytoplasmic segment spans residues L278–K299. A helical transmembrane segment spans residues L300–A320. The Extracellular segment spans residues K321–E343. The chain crosses the membrane as a helical span at residues H344–S364. At K365 to K378 the chain is on the cytoplasmic side. A helical transmembrane segment spans residues A379 to P398. At K399–G404 the chain is on the extracellular side. A helical transmembrane segment spans residues G405–V425. Topologically, residues Y426–D508 are cytoplasmic. Residues G509 to G529 traverse the membrane as a helical segment. Topologically, residues P530–N549 are extracellular.

This sequence belongs to the SLC33A transporter family. In terms of assembly, homodimerizes. In terms of tissue distribution, ubiquitous. Detected in heart, brain, placenta, lung, liver, skeletal muscle, kidney and pancreas. With strongest signals in pancreas.

Its subcellular location is the endoplasmic reticulum membrane. The catalysed reaction is acetyl-CoA(in) = acetyl-CoA(out). Functionally, acetyl-CoA transporter that mediates active acetyl-CoA import through the endoplasmic reticulum (ER) membrane into the ER lumen where specific ER-based acetyl-CoA:lysine acetyltransferases are responsible for the acetylation of ER-based protein substrates, such as BACE1. Necessary for O-acetylation of gangliosides. This chain is Acetyl-coenzyme A transporter 1, found in Homo sapiens (Human).